A 782-amino-acid chain; its full sequence is MATYKVQIPASFKTSYSFAESLKVSIAISAFSVKVPCEGAANCNSVRLVNSKEPEKYVSDANAIVSFLYWKQEEDLFNSFISSKLSILDWEALQFTPKAYTAKTKEDFAYLLSQLETIFKENEILNEFTPVEVALASDIYFCVLNGAPVREYPLLSAWYLKIEKQKPFVQALKLTFEKTLGQPAVTSTEKIPVSETTRNVNSQHLMRERVPGEKILPKSNERNILITSALPYVNNVPHLGNIVGSTLSADVFARYHRARNHNTLYICGTDEYGTATETKALEEGVSPKELCDKYHALHKEVYDWFEIDFDHFGRTTTPKQTGIAQHIFTKLYNNDYMAIDTMTQLYCEVHQGYLADRYVEGTCPKCGYDDARGDQCDGCGGLLNAFELIDPKCKLDRATPVKRETKHVFLSLDKLQPAVESWAMQSAVEGKWSNNGRSITESWLKEGLRPRCITRDLKWGTPVPLEEFKGKVLYVWFDATIGYISITANYTDEWEKWWRNPEQVKLYQFMGKDNVPFHTVIFPSSLLGTGEKWTMLHHINTTDYLNYETGKFSKSRGVGVFGNTAQDIGLSPSVWRYYLLSSRPETSDTMFTWKEFITRHNSELLANLGNFVNRTLKFTTAKYNGLVPHYLTDPSVGAGKLKADFVKDVNALLAKYNAALEASKLREGLRLAMEISARGNQYLQDNRIDNKCYLYERQKCADAIGYALNLIYLLAAIFYPYMPSTSTSIYKQLNAPAAAIPDTWELCLLPGHRIGEPEYLFTRIDESMEEEWRSKYGGNGSN.

The short motif at 231 to 241 (PYVNNVPHLGN) is the 'HIGH' region element. Residues 551-555 (KFSKS) carry the 'KMSKS' region motif.

This sequence belongs to the class-I aminoacyl-tRNA synthetase family.

The protein resides in the cytoplasm. It carries out the reaction tRNA(Met) + L-methionine + ATP = L-methionyl-tRNA(Met) + AMP + diphosphate. This Schizosaccharomyces pombe (strain 972 / ATCC 24843) (Fission yeast) protein is Probable methionine--tRNA ligase, cytoplasmic (rar1).